A 156-amino-acid polypeptide reads, in one-letter code: MIRYGTYMSPFGPITLVSEDEKIVMLDFCKCAEESLVDNNSFVGLFKKLDNYFQGKRTDFDDIPIRLNTNSFRMRVYKEVRKVKWGEVVTYKDIAEAVGTSPRAVGVALSKNPILLLIPCHRVVAENGLGGYSRGVELKRKLLELEGSLIKVPSIK.

Catalysis depends on Cys120, which acts as the Nucleophile; methyl group acceptor.

It belongs to the MGMT family.

The protein resides in the cytoplasm. It carries out the reaction a 6-O-methyl-2'-deoxyguanosine in DNA + L-cysteinyl-[protein] = S-methyl-L-cysteinyl-[protein] + a 2'-deoxyguanosine in DNA. It catalyses the reaction a 4-O-methyl-thymidine in DNA + L-cysteinyl-[protein] = a thymidine in DNA + S-methyl-L-cysteinyl-[protein]. Involved in the cellular defense against the biological effects of O6-methylguanine (O6-MeG) and O4-methylthymine (O4-MeT) in DNA. Repairs the methylated nucleobase in DNA by stoichiometrically transferring the methyl group to a cysteine residue in the enzyme. This is a suicide reaction: the enzyme is irreversibly inactivated. This chain is Methylated-DNA--protein-cysteine methyltransferase, found in Metallosphaera sedula (strain ATCC 51363 / DSM 5348 / JCM 9185 / NBRC 15509 / TH2).